Here is a 1273-residue protein sequence, read N- to C-terminus: Cullin-associated NEDD8-dissociated protein 2 (1273 aa).

An N-acetylserine modification is found at S2. HEAT repeat units lie at residues 2–36, 37–74, 82–119, 121–157, 167–205, 209–246, 248–284, 292–329, 364–405, 409–446, 469–506, 554–591, 602–641, 685–722, 727–764, 768–807, 809–850, 894–931, 933–968, 970–1003, 1004–1040, 1044–1081, 1085–1121, 1142–1178, 1194–1231, and 1241–1273; these read STGA…LDPL, PWLQ…ELQK, DSER…KVKE, QVEN…ELPP, SVCR…RLGA, TFHA…ACST, LFVE…SVGR, AHLD…KCPK, TEDS…SRPD, DFHC…HTRP, AQVP…VLPG, PHLP…TLWP, PYVG…HLGD, PILA…SQGL, PAVR…TQPA, EVSG…TRPP, VEYS…ALSA, GPQR…GNLP, FLPF…DNLK, YVED…LVFV, NPPF…DQPH, PLLK…NKPS, DLLD…DDGL, LDIC…LCPA, TCTA…NPEV, and STQI…MELS. The tract at residues 352-383 is disordered; it reads YNHDSDEEEQMETEDSEFSEQESEDEYSDDDD. Acidic residues predominate over residues 356–383; sequence SDEEEQMETEDSEFSEQESEDEYSDDDD.

This sequence belongs to the CAND family. Binds TBP, CNOT3 and UBE3C. In terms of processing, ubiquitinated and targeted for proteasomal degradation. Detected in heart and skeletal muscle.

The protein resides in the nucleus. Functionally, probable assembly factor of SCF (SKP1-CUL1-F-box protein) E3 ubiquitin ligase complexes that promotes the exchange of the substrate-recognition F-box subunit in SCF complexes, thereby playing a key role in the cellular repertoire of SCF complexes. This is Cullin-associated NEDD8-dissociated protein 2 (Cand2) from Rattus norvegicus (Rat).